The sequence spans 284 residues: 4-diphosphocytidyl-2-C-methyl-D-erythritol kinase (284 aa).

Lys-14 is a catalytic residue. 98-108 (PMGGGLGGGSS) contributes to the ATP binding site. Asp-140 is an active-site residue.

It belongs to the GHMP kinase family. IspE subfamily.

The catalysed reaction is 4-CDP-2-C-methyl-D-erythritol + ATP = 4-CDP-2-C-methyl-D-erythritol 2-phosphate + ADP + H(+). Its pathway is isoprenoid biosynthesis; isopentenyl diphosphate biosynthesis via DXP pathway; isopentenyl diphosphate from 1-deoxy-D-xylulose 5-phosphate: step 3/6. Functionally, catalyzes the phosphorylation of the position 2 hydroxy group of 4-diphosphocytidyl-2C-methyl-D-erythritol. The sequence is that of 4-diphosphocytidyl-2-C-methyl-D-erythritol kinase from Shewanella sp. (strain W3-18-1).